A 71-amino-acid chain; its full sequence is uncharacterized protein (71 aa).

This is an uncharacterized protein from Acheta domesticus (House cricket).